A 798-amino-acid chain; its full sequence is MNDMNLSPVGMEQLSSSSVSNALPVSGSHLGLAASPSHSAIPAPGLPVAIPNLGPSLSSLPSALSLMLPMGIGDRGVMCGLPERNYTLPPPPYPHLESSYFRTILPGILSYLADRPPPQYIHPNSINVDGNTALSITNNPSALDPYQANGNVGLELGIVSIDSRSVNTHGAQSLHPNDGHEVALDTTITMENVSRVTSPISTDGMAEELTMDGVTGEHSQIPNGSRSHEPLSVDSVSNNLTADTVGHGGVIPIHGNGLELPVVMETDHIANRVNGISDSVLSDSIHTVAMSTNSVSVALSTSHNFASLESVSLQEVGLSLEPVAVSSITQEVAMGTGHVDVSSDSLSFVPSSLQMEDSNSNKENMATLFTIWCTLCDRAYPSDCPDHGPVTFVPDTPIESRARLSLPKQLVLRQSIVGTDVGVWTAETIPVRTCFGPLIGQQSHSMEVAEWTDKAVSHVWKIYHNGVLEFCIITTDENECNWMMFVRKARNREEQNLVAYPHDGKIYFCTSQDIPPENELLFYYSRDYAQQIGVPEHPDVHLCNCGKECSSYSEFKAHLTSHIHNHLPSQGHSSSHGPSHSKERKWKCSMCPQAFISPSKLHVHFMGHMGMKPHKCDFCSKAFSDPSNLRTHLKIHTGQKNYRCTLCDKSFTQKAHLESHMVIHTGEKNLKCDYCDKLFMRRQDLKQHVLIHTQERQIKCPKCDKLFLRTNHLKKHLNSHEGRRDYVCEKCTKAYLTKYHLTRHLKACKEPASSSSAQDDEDEDGDSGEDGLPGSMTTEGCRMSSAVYSADESLSAHK.

Residues 408–525 (KQLVLRQSIV…PENELLFYYS (118 aa)) form the SET domain. C2H2-type zinc fingers lie at residues 586 to 608 (WKCS…FMGH), 614 to 636 (HKCD…LKIH), 642 to 664 (YRCT…MVIH), 670 to 692 (LKCD…VLIH), and 698 to 720 (IKCP…LNSH). Residues 726 to 747 (YVCEKCTKAYLTKYHLTRHLKA) form a C2H2-type 6; degenerate zinc finger. The segment at 750–798 (EPASSSSAQDDEDEDGDSGEDGLPGSMTTEGCRMSSAVYSADESLSAHK) is disordered. Acidic residues predominate over residues 758-769 (QDDEDEDGDSGE).

It belongs to the class V-like SAM-binding methyltransferase superfamily.

Its subcellular location is the nucleus. May function as a transcription factor involved in cell differentiation. This chain is PR domain zinc finger protein 4 (Prdm4), found in Rattus norvegicus (Rat).